A 157-amino-acid chain; its full sequence is Ribosome maturation factor RimP (157 aa).

This sequence belongs to the RimP family.

The protein resides in the cytoplasm. Required for maturation of 30S ribosomal subunits. In Helicobacter hepaticus (strain ATCC 51449 / 3B1), this protein is Ribosome maturation factor RimP.